The following is a 524-amino-acid chain: MAKFISAKEAAKLIPDGSTVGVAGMGLAGWPEEVAVAIADNFKETGHPCNLTMKQGSAMGDWRERGMTRLGLEGLVTKWSAAHIGSAFAMNDLVRAEKMACHCLPQGVIVNLWREIAAKRPGLITKVGLGTFVDPRLEGGKMNKVTTEDLVELIEFNGEEYLFYKSFKLDVAMLRGTTADENGNITFENEGPINEGLAVAQAAKNSGGIVIVQVEYQALKNTLKPKDVKIPGALVDYVVVATDKNACWQTEGVYYEPAFAGNLRKPLSAIPILPLTERKVMARRAAMELSKGDLVNLGVGIPSDVASIVSEAGYIEEITMTTEIGGFGGIPASLPNFGSSYNAEANIDHGSMFDLYDGGGIDVAVLGLAQADEAGNINVSKFTIPGLGDRLTGPGGFINITQSTQKVVFAGSFNAKCEVEISDGKLIIKKEGRGKKLLKEVEQVTFSGKYAAENGQEILYVTERCVFKLINGKMTVIEIAPGIDLQKDILDQMDFTPAISADLKEMDSGLFSEKWDGLDTIMGK.

Catalysis depends on Glu323, which acts as the 5-glutamyl coenzyme A thioester intermediate.

It belongs to the 3-oxoacid CoA-transferase family. Homodimer.

The enzyme catalyses hydrocaffeoyl-CoA + (E)-caffeate = 3-(3,4-dihydroxyphenyl)propanoate + (E)-caffeoyl-CoA. Involved in caffeate respiration, which consists in the reduction of the C-C double bond of caffeate. CarA catalyzes an energy-saving CoA loop for caffeate activation in the steady state of caffeate respiration. It catalyzes the formation of caffeyl-CoA from caffeate with hydrocaffeyl-CoA as the CoA donor via a ping-pong mechanism. In addition to caffeate, the enzyme can utilize 4-coumarate or ferulate as CoA acceptor. Neither acetyl-CoA nor butyryl-CoA served as the CoA donor. The chain is Caffeate CoA-transferase from Acetobacterium woodii.